Consider the following 432-residue polypeptide: D-amino acid dehydrogenase 1 (432 aa).

3-17 (VLVLGSGVIGTASAY) contributes to the FAD binding site. The segment at 410–432 (GLDISRYSNSPENAKNAHPAPAH) is disordered.

This sequence belongs to the DadA oxidoreductase family. FAD serves as cofactor.

The catalysed reaction is a D-alpha-amino acid + A + H2O = a 2-oxocarboxylate + AH2 + NH4(+). It functions in the pathway amino-acid degradation; D-alanine degradation; NH(3) and pyruvate from D-alanine: step 1/1. In terms of biological role, catalyzes the oxidative deamination of D-amino acids. Has very broad substrate specificity; all the D-amino acids tested can be used as the substrate except D-Glu and D-Gln. Participates in the utilization of several D-amino acids as the sole source of nitrogen, i.e. D-alanine, D-histidine, D-phenylalanine, D-serine, D-threonine, and D-valine. This Pseudomonas aeruginosa (strain ATCC 15692 / DSM 22644 / CIP 104116 / JCM 14847 / LMG 12228 / 1C / PRS 101 / PAO1) protein is D-amino acid dehydrogenase 1 (dadA1).